The chain runs to 283 residues: ATP synthase gamma chain (283 aa).

This sequence belongs to the ATPase gamma chain family. F-type ATPases have 2 components, CF(1) - the catalytic core - and CF(0) - the membrane proton channel. CF(1) has five subunits: alpha(3), beta(3), gamma(1), delta(1), epsilon(1). CF(0) has three main subunits: a, b and c.

It localises to the cell membrane. Produces ATP from ADP in the presence of a proton gradient across the membrane. The gamma chain is believed to be important in regulating ATPase activity and the flow of protons through the CF(0) complex. The protein is ATP synthase gamma chain of Clostridium perfringens (strain ATCC 13124 / DSM 756 / JCM 1290 / NCIMB 6125 / NCTC 8237 / Type A).